We begin with the raw amino-acid sequence, 183 residues long: UPF0397 protein EAT1b_2102 (183 aa).

The next 5 membrane-spanning stretches (helical) occupy residues 9–29, 42–62, 74–94, 117–137, and 147–167; these read IVAT…AAIP, AFLA…IGLI, SPWW…GLIA, AVVQ…LIYA, and GAVA…LLLV.

It belongs to the UPF0397 family.

It localises to the cell membrane. This is UPF0397 protein EAT1b_2102 from Exiguobacterium sp. (strain ATCC BAA-1283 / AT1b).